Reading from the N-terminus, the 325-residue chain is DDB1- and CUL4-associated factor 7 homolog (325 aa).

WD repeat units follow at residues 62 to 104 (EHPY…RSIK), 115 to 155 (EFCA…AKTQ), 158 to 197 (AHDKEVFDIAFARGTDLFASVGADGSLRMFDLRNLEHSTI), and 247 to 287 (FHKS…KPIE).

This sequence belongs to the WD repeat DCAF7 family.

This is DDB1- and CUL4-associated factor 7 homolog (wdr68) from Dictyostelium discoideum (Social amoeba).